Reading from the N-terminus, the 154-residue chain is Protein X (154 aa).

The disordered stretch occupies residues 28–48 (RPLPGPLGTLPPASPPAVPTD). Residues 68-117 (PCALRFTSARRMETTVNAHGNLPKVLHKRTLGLSAMSTTDLEAYFKDCVF) form a mitochondrial targeting sequence region.

It belongs to the orthohepadnavirus protein X family. As to quaternary structure, may form homodimer. May interact with host CEBPA, CFLAR, CREB1, DDB1, E4F1, HBXIP, HSPD1/HSP60, NFKBIA, POLR2E and SMAD4. Interacts with host SMC5-SMC6 complex and induces its degradation. Interacts with host TRPC4AP; leading to prevent ubiquitination of TRPC4AP. Interacts with host PLSCR1; this interaction promotes ubiquitination and degradation of HBx and impairs HBx-mediated cell proliferation. Post-translationally, a fraction may be phosphorylated in insect cells and HepG2 cells, a human hepatoblastoma cell line. Phosphorylated in vitro by host protein kinase C or mitogen-activated protein kinase. N-acetylated in insect cells.

It localises to the host cytoplasm. It is found in the host nucleus. Its subcellular location is the host mitochondrion. Its function is as follows. Multifunctional protein that plays a role in silencing host antiviral defenses and promoting viral transcription. Does not seem to be essential for HBV infection. May be directly involved in development of cirrhosis and liver cancer (hepatocellular carcinoma). Most of cytosolic activities involve modulation of cytosolic calcium. The effect on apoptosis is controversial depending on the cell types in which the studies have been conducted. May induce apoptosis by localizing in mitochondria and causing loss of mitochondrial membrane potential. May also modulate apoptosis by binding host CFLAR, a key regulator of the death-inducing signaling complex (DISC). Promotes viral transcription by using the host E3 ubiquitin ligase DDB1 to target the SMC5-SMC6 complex to proteasomal degradation. This host complex would otherwise bind to viral episomal DNA, and prevents its transcription. Moderately stimulates transcription of many different viral and cellular transcription elements. Promoters and enhancers stimulated by HBx contain DNA binding sites for NF-kappa-B, AP-1, AP-2, c-EBP, ATF/CREB, or the calcium-activated factor NF-AT. The sequence is that of Protein X from Hepatitis B virus genotype B2 subtype adw (isolate China/patient4/1996) (HBV-B).